The following is a 204-amino-acid chain: Pre-mRNA leakage protein 1 (204 aa).

In terms of domain architecture, FHA spans tyrosine 104–isoleucine 172.

Belongs to the pre-mRNA retention and splicing (RES) complex composed of at least BUD13, IST3 and PML1.

It localises to the cytoplasm. The protein resides in the nucleus. Functionally, required for efficient splicing and pre-mRNA nuclear retention. This Saccharomyces cerevisiae (strain ATCC 204508 / S288c) (Baker's yeast) protein is Pre-mRNA leakage protein 1 (PML1).